A 256-amino-acid polypeptide reads, in one-letter code: D-aminoacyl-tRNA deacylase (256 aa).

This sequence belongs to the DtdA deacylase family. Monomer. The cofactor is Zn(2+).

The enzyme catalyses a D-aminoacyl-tRNA + H2O = a tRNA + a D-alpha-amino acid + H(+). It catalyses the reaction glycyl-tRNA(Ala) + H2O = tRNA(Ala) + glycine + H(+). In terms of biological role, D-aminoacyl-tRNA deacylase with broad substrate specificity. By recycling D-aminoacyl-tRNA to D-amino acids and free tRNA molecules, this enzyme counteracts the toxicity associated with the formation of D-aminoacyl-tRNA entities in vivo. In Thermoplasma acidophilum (strain ATCC 25905 / DSM 1728 / JCM 9062 / NBRC 15155 / AMRC-C165), this protein is D-aminoacyl-tRNA deacylase.